The following is a 261-amino-acid chain: Cytochrome c oxidase subunit 3 (261 aa).

Over 1–15 (MTHQTHAYHMVNPSP) the chain is Mitochondrial matrix. The chain crosses the membrane as a helical span at residues 16-34 (WPLTGALSALLMTSGLIMW). At 35 to 40 (FHFNST) the chain is on the mitochondrial intermembrane side. A helical transmembrane segment spans residues 41–66 (ILLMLGLTTNMLTMYQWWRDVIREST). Over 67–72 (FQGHHT) the chain is Mitochondrial matrix. A helical transmembrane segment spans residues 73 to 105 (PNVQKGLRYGMILFIISEVLFFTGFFWAFYHSS). Residues 106-128 (LAPTPELGGCWPPTGIHPLNPLE) are Mitochondrial intermembrane-facing. A helical membrane pass occupies residues 129–152 (VPLLNTSVLLASGVSITWAHHSLM). Residues 153–155 (EGN) lie on the Mitochondrial matrix side of the membrane. The chain crosses the membrane as a helical span at residues 156–183 (RNHMLQALFITIALGVYFTLLQASEYYE). The Mitochondrial intermembrane segment spans residues 184 to 190 (APFTISD). The helical transmembrane segment at 191–223 (GVYGSTFFVATGFHGLHVIIGSTFLIVCFFRQL) threads the bilayer. Topologically, residues 224–232 (KFHFTSNHH) are mitochondrial matrix. Residues 233-256 (FGFEAAAWYWHFVDVVWLFLYVSI) traverse the membrane as a helical segment. Over 257–261 (YWWGS) the chain is Mitochondrial intermembrane.

The protein belongs to the cytochrome c oxidase subunit 3 family. As to quaternary structure, component of the cytochrome c oxidase (complex IV, CIV), a multisubunit enzyme composed of 14 subunits. The complex is composed of a catalytic core of 3 subunits MT-CO1, MT-CO2 and MT-CO3, encoded in the mitochondrial DNA, and 11 supernumerary subunits COX4I, COX5A, COX5B, COX6A, COX6B, COX6C, COX7A, COX7B, COX7C, COX8 and NDUFA4, which are encoded in the nuclear genome. The complex exists as a monomer or a dimer and forms supercomplexes (SCs) in the inner mitochondrial membrane with NADH-ubiquinone oxidoreductase (complex I, CI) and ubiquinol-cytochrome c oxidoreductase (cytochrome b-c1 complex, complex III, CIII), resulting in different assemblies (supercomplex SCI(1)III(2)IV(1) and megacomplex MCI(2)III(2)IV(2)).

It localises to the mitochondrion inner membrane. The enzyme catalyses 4 Fe(II)-[cytochrome c] + O2 + 8 H(+)(in) = 4 Fe(III)-[cytochrome c] + 2 H2O + 4 H(+)(out). Component of the cytochrome c oxidase, the last enzyme in the mitochondrial electron transport chain which drives oxidative phosphorylation. The respiratory chain contains 3 multisubunit complexes succinate dehydrogenase (complex II, CII), ubiquinol-cytochrome c oxidoreductase (cytochrome b-c1 complex, complex III, CIII) and cytochrome c oxidase (complex IV, CIV), that cooperate to transfer electrons derived from NADH and succinate to molecular oxygen, creating an electrochemical gradient over the inner membrane that drives transmembrane transport and the ATP synthase. Cytochrome c oxidase is the component of the respiratory chain that catalyzes the reduction of oxygen to water. Electrons originating from reduced cytochrome c in the intermembrane space (IMS) are transferred via the dinuclear copper A center (CU(A)) of subunit 2 and heme A of subunit 1 to the active site in subunit 1, a binuclear center (BNC) formed by heme A3 and copper B (CU(B)). The BNC reduces molecular oxygen to 2 water molecules using 4 electrons from cytochrome c in the IMS and 4 protons from the mitochondrial matrix. The sequence is that of Cytochrome c oxidase subunit 3 (MT-CO3) from Eudorcas thomsonii (Thomson's gazelle).